The following is a 199-amino-acid chain: Large ribosomal subunit protein bL25 (199 aa).

Residues 1 to 21 (MNIEKTLSVQKREGYGKGPSG) form a disordered region.

It belongs to the bacterial ribosomal protein bL25 family. CTC subfamily. As to quaternary structure, part of the 50S ribosomal subunit; part of the 5S rRNA/L5/L18/L25 subcomplex. Contacts the 5S rRNA. Binds to the 5S rRNA independently of L5 and L18.

In terms of biological role, this is one of the proteins that binds to the 5S RNA in the ribosome where it forms part of the central protuberance. The polypeptide is Large ribosomal subunit protein bL25 (Desulfovibrio desulfuricans (strain ATCC 27774 / DSM 6949 / MB)).